The chain runs to 110 residues: Secreted RxLR effector protein 89 (110 aa).

The signal sequence occupies residues 1 to 22 (MTSVVIVVSVAVLLGVLVITDS). N-linked (GlcNAc...) asparagine glycosylation occurs at Asn29. The RxLR-dEER signature appears at 61-74 (RHLRTILQWWQERR).

This sequence belongs to the RxLR effector family.

The protein resides in the secreted. It localises to the host nucleus. It is found in the host cytoplasm. Functionally, secreted effector that completely suppresses the host cell death induced by cell death-inducing proteins. The polypeptide is Secreted RxLR effector protein 89 (Plasmopara viticola (Downy mildew of grapevine)).